The sequence spans 968 residues: Glycine dehydrogenase (decarboxylating) (968 aa).

K712 carries the N6-(pyridoxal phosphate)lysine modification.

This sequence belongs to the GcvP family. As to quaternary structure, the glycine cleavage system is composed of four proteins: P, T, L and H. It depends on pyridoxal 5'-phosphate as a cofactor.

It catalyses the reaction N(6)-[(R)-lipoyl]-L-lysyl-[glycine-cleavage complex H protein] + glycine + H(+) = N(6)-[(R)-S(8)-aminomethyldihydrolipoyl]-L-lysyl-[glycine-cleavage complex H protein] + CO2. Functionally, the glycine cleavage system catalyzes the degradation of glycine. The P protein binds the alpha-amino group of glycine through its pyridoxal phosphate cofactor; CO(2) is released and the remaining methylamine moiety is then transferred to the lipoamide cofactor of the H protein. In Prochlorococcus marinus (strain NATL2A), this protein is Glycine dehydrogenase (decarboxylating).